The sequence spans 42 residues: Putative protein RNF216-like (42 aa).

The protein is Putative protein RNF216-like (RNF216P1) of Homo sapiens (Human).